We begin with the raw amino-acid sequence, 2364 residues long: Actin-binding protein F (2364 aa).

Over residues 138-157 (THQTSPTTETTTTPSSSSSS) the composition is skewed to low complexity. 4 disordered regions span residues 138-168 (THQTSPTTETTTTPSSSSSSSHDDKSESTLD), 1087-1111 (QASKYNESEVKDEKSMRNRQVEKRR), 1412-1435 (NNNSNNNNNTTNSNSFGDAKRAPM), and 1929-2088 (KLIS…SEFN). Positions 1092–1111 (NESEVKDEKSMRNRQVEKRR) are enriched in basic and acidic residues. Composition is skewed to low complexity over residues 1412–1428 (NNNSNNNNNTTNSNSFG) and 1932–1960 (SSSTTTDSKSTHSSVISSSSSSNLSTTTD). The stretch at 1960–2017 (DSSKDKKKLEKEEKQREKERKQKEKEDKKREKEELKKKEKEEKKKKEEEKKLKKKSGS) forms a coiled coil. A compositionally biased stretch (basic and acidic residues) spans 1961–2010 (SSKDKKKLEKEEKQREKERKQKEKEDKKREKEELKKKEKEEKKKKEEEKK). Positions 2027 to 2047 (ATPTTTTTTEATTTTTTTTAT) are enriched in low complexity. Residues 2052 to 2070 (IKPEKIASDDEHDDHHHDE) show a composition bias toward basic and acidic residues. Positions 2071–2081 (HDEEDDDDEPL) are enriched in acidic residues. Positions 2129–2173 (VQRWNSLFKDLRNKVDQVSNKDSVEIDYEKEIDRERRQNKMASNE) form a coiled coil.

As to quaternary structure, interacts with actin.

The protein resides in the nucleus. Its subcellular location is the cytoplasm. It is found in the cytoskeleton. The sequence is that of Actin-binding protein F (abpF) from Dictyostelium discoideum (Social amoeba).